The chain runs to 336 residues: Tetraacyldisaccharide 4'-kinase (336 aa).

58-65 contributes to the ATP binding site; sequence AVGGSGKT.

It belongs to the LpxK family.

It catalyses the reaction a lipid A disaccharide + ATP = a lipid IVA + ADP + H(+). Its pathway is glycolipid biosynthesis; lipid IV(A) biosynthesis; lipid IV(A) from (3R)-3-hydroxytetradecanoyl-[acyl-carrier-protein] and UDP-N-acetyl-alpha-D-glucosamine: step 6/6. Its function is as follows. Transfers the gamma-phosphate of ATP to the 4'-position of a tetraacyldisaccharide 1-phosphate intermediate (termed DS-1-P) to form tetraacyldisaccharide 1,4'-bis-phosphate (lipid IVA). The chain is Tetraacyldisaccharide 4'-kinase from Aromatoleum aromaticum (strain DSM 19018 / LMG 30748 / EbN1) (Azoarcus sp. (strain EbN1)).